The following is a 71-amino-acid chain: Small ribosomal subunit protein bS21 (71 aa).

This sequence belongs to the bacterial ribosomal protein bS21 family.

In Buchnera aphidicola subsp. Schizaphis graminum (strain Sg), this protein is Small ribosomal subunit protein bS21.